A 431-amino-acid chain; its full sequence is MFAKLSARGIATRMSFLAQKTASQETTAAAGSRSELVYARENKYGAHNYHPLPVALTKGEGVFVWDVEGKRYFDYLSAYSAVNQGHCHPKIVAALTAQASKLALTSRAFYSDVLGEYEEYVTKLFGFDKVLPMNTGVEGGETACKLARKWGYLEKKIPANQAKIIFARNNFWGRTLSAVSASNDPSSYEGFGPFMPGFELIEYDNVSALEESLKDPNVCAFMVEPIQGEAGVVVPSDGYLKKVRELCTKYNVLWIADEVQTGLARTGKLLAVDYEQVQPDILILGKALSGGMYPVSAVLCNDQVMLCIKPGEHGSTYGGNPLGCRVAMAALEVLQEEKLAENAFKMGDLLRNELSTLPKDVVSVVRGKGLLNAIVINQKFDAWEVCLRLKENGLLAKPTHGDIIRFAPPLVINETQMRESIDIIRKTILSM.

N6-(pyridoxal phosphate)lysine is present on Lys-286.

This sequence belongs to the class-III pyridoxal-phosphate-dependent aminotransferase family. In terms of assembly, homotetramer. Requires pyridoxal 5'-phosphate as cofactor.

The protein resides in the mitochondrion matrix. The catalysed reaction is a 2-oxocarboxylate + L-ornithine = L-glutamate 5-semialdehyde + an L-alpha-amino acid. It participates in amino-acid biosynthesis; L-proline biosynthesis; L-glutamate 5-semialdehyde from L-ornithine: step 1/1. This is Ornithine aminotransferase, mitochondrial (Oat) from Drosophila melanogaster (Fruit fly).